The primary structure comprises 237 residues: Orotidine 5'-phosphate decarboxylase (237 aa).

Residues D17, K39, 66–75, T121, R182, Q191, G211, and R212 each bind substrate; that span reads DLKLHDIGNT. Residue K68 is the Proton donor of the active site.

The protein belongs to the OMP decarboxylase family. Type 1 subfamily. Homodimer.

The enzyme catalyses orotidine 5'-phosphate + H(+) = UMP + CO2. It functions in the pathway pyrimidine metabolism; UMP biosynthesis via de novo pathway; UMP from orotate: step 2/2. In terms of biological role, catalyzes the decarboxylation of orotidine 5'-monophosphate (OMP) to uridine 5'-monophosphate (UMP). The sequence is that of Orotidine 5'-phosphate decarboxylase from Rhodopseudomonas palustris (strain TIE-1).